A 37-amino-acid polypeptide reads, in one-letter code: Large ribosomal subunit protein bL36c (37 aa).

The protein belongs to the bacterial ribosomal protein bL36 family.

The protein resides in the plastid. The protein localises to the chloroplast. The sequence is that of Large ribosomal subunit protein bL36c from Gracilaria tenuistipitata var. liui (Red alga).